Consider the following 116-residue polypeptide: Toxin ICK-10 (116 aa).

The signal sequence occupies residues 1-19 (MMKLYSLVIIATLAAAAFA). 4 cysteine pairs are disulfide-bonded: C56/C71, C64/C77, C68/C113, and C70/C84.

This sequence belongs to the neurotoxin 25 family. ICK-8 subfamily. Expressed by the venom gland.

It localises to the secreted. Its function is as follows. Ion channel inhibitor. This Trittame loki (Brush-footed trapdoor spider) protein is Toxin ICK-10.